We begin with the raw amino-acid sequence, 121 residues long: Large ribosomal subunit protein uL14 (121 aa).

This sequence belongs to the universal ribosomal protein uL14 family. Part of the 50S ribosomal subunit. Forms a cluster with proteins L3 and L19. In the 70S ribosome, L14 and L19 interact and together make contacts with the 16S rRNA in bridges B5 and B8.

Binds to 23S rRNA. Forms part of two intersubunit bridges in the 70S ribosome. The polypeptide is Large ribosomal subunit protein uL14 (Aquifex aeolicus (strain VF5)).